A 184-amino-acid polypeptide reads, in one-letter code: ADP-ribosylation factor-like protein 8c (184 aa).

Positions 1-18 (MGLWDSLLNWLRSLFFKQ) form an intramembrane region, note=Mediates targeting to membranes. GTP contacts are provided by residues 29–34 (NAGKTS), 48–51 (MIPT), 70–74 (DLGGQ), and 129–132 (NKID).

Belongs to the small GTPase superfamily. Arf family. As to quaternary structure, interacts with tubulin.

It is found in the late endosome membrane. It localises to the lysosome membrane. The protein localises to the cytoplasm. The protein resides in the cytoskeleton. Its subcellular location is the spindle. In terms of biological role, may play a role in lysosome motility. May play a role in chromosome segregation. (Microbial infection) Component of tomato mosaic virus (ToMV) RNA replication complexes. Required for tobamovirus multiplication, especially for efficient negative-strand RNA synthesis and viral RNA capping. The protein is ADP-ribosylation factor-like protein 8c of Arabidopsis thaliana (Mouse-ear cress).